The chain runs to 911 residues: Androgen receptor (911 aa).

A modulating region spans residues 1–549; that stretch reads MEVQLGLGRV…PIDYYFPPQK (549 aa). The interaction with ZNF318 stretch occupies residues 1 to 578; sequence MEVQLGLGRV…GSCKVFFKRA (578 aa). Disordered stretches follow at residues 35 to 164 and 192 to 225; these read QNPG…LSLL and QQQQ…YLGG. The span at 44 to 88 shows a compositional bias: low complexity; that stretch reads AASAAPPGASLLLQQQQQQQQQQQQQQQQQQQQQQETSPRQQQQQ. Phosphoserine; by CDK9 is present on Ser81. Residue Ser93 is modified to Phosphoserine. The span at 192–214 shows a compositional bias: low complexity; that stretch reads QQQQQEAVSEGSSSGRAREASGA. Over residues 215-225 the composition is skewed to polar residues; the sequence is PTSSKDNYLGG. Tyr222 carries the phosphotyrosine; by CSK modification. Residue Ser255 is modified to Phosphoserine. Residue Tyr266 is modified to Phosphotyrosine; by CSK and TNK2. Residues Tyr306, Tyr345, Tyr356, and Tyr361 each carry the phosphotyrosine; by CSK modification. Tyr362 is modified (phosphotyrosine; by CSK and TNK2). Lys385 is covalently cross-linked (Glycyl lysine isopeptide (Lys-Gly) (interchain with G-Cter in SUMO)). Tyr392 carries the phosphotyrosine; by CSK modification. Residue Lys512 forms a Glycyl lysine isopeptide (Lys-Gly) (interchain with G-Cter in SUMO) linkage. 2 positions are modified to phosphotyrosine; by CSK: Tyr526 and Tyr543. The interaction with LPXN stretch occupies residues 543–910; sequence YYFPPQKTCL…GKVKPIYFHT (368 aa). 2 NR C4-type zinc fingers span residues 551-571 and 587-611; these read CLIC…CGSC and CASR…LRKC. The segment at residues 551-623 is a DNA-binding region (nuclear receptor); the sequence is CLICGDEASG…AGMTLGARKL (73 aa). The interval 563 to 653 is interaction with HIPK3; the sequence is YGALTCGSCK…TEETTQKLTV (91 aa). The interaction with CCAR1 stretch occupies residues 583–910; the sequence is QKYLCASRND…GKVKPIYFHT (328 aa). Positions 616–910 are interaction with KAT7; the sequence is MTLGARKLKK…GKVKPIYFHT (295 aa). Ser642 is subject to Phosphoserine; by STK4/MST1. The NR LBD domain occupies 660–891; sequence ECQPIFLNVL…DFPEMMAEII (232 aa). Residues Asn697 and Arg744 each coordinate 17beta-hydroxy-5alpha-androstan-3-one. Glycyl lysine isopeptide (Lys-Gly) (interchain with G-Cter in ubiquitin) cross-links involve residues Lys837 and Lys839. Thr869 serves as a coordination point for 17beta-hydroxy-5alpha-androstan-3-one. Tyr907 is subject to Phosphotyrosine; by CSK.

Belongs to the nuclear hormone receptor family. NR3 subfamily. As to quaternary structure, binds DNA as a homodimer. Part of a ternary complex containing AR, EFCAB6/DJBP and PARK7. Interacts with HIPK3 and NR0B2 in the presence of androgen. The ligand binding domain interacts with KAT7/HBO1 in the presence of dihydrotestosterone. Interacts with EFCAB6/DJBP, PQBP1, RANBP9, RBAK, SPDEF, SRA1, TGFB1I1 and RREB1. Interacts with ZMIZ1/ZIMP10 and ZMIZ2/ZMIP7 which both enhance its transactivation activity. Interacts with SLC30A9 and RAD54L2/ARIP4. Interacts with MACROD1 (via macro domain). Interacts via the ligand-binding domain with LXXLL and FXXLF motifs from NCOA1, NCOA2, NCOA3 and MAGEA11. Interacts (via nuclear receptor DNA binding domain and nuclear receptor ligand binding domain) with NCOA4. The AR N-terminal poly-Gln region binds Ran resulting in enhancement of AR-mediated transactivation. Ran-binding decreases as the poly-Gln length increases. Interacts with HIP1 (via coiled coil domain). Interacts (via ligand-binding domain) with TRIM68. Interacts with TNK2. Interacts with USP26. Interacts with RNF6. Interacts (regulated by RNF6 probably through polyubiquitination) with RNF14; regulates AR transcriptional activity. Interacts with PRMT2 and TRIM24. Interacts with RACK1. Interacts with RANBP10; this interaction enhances dihydrotestosterone-induced AR transcriptional activity. Interacts with PRPF6 in a hormone-independent way; this interaction enhances dihydrotestosterone-induced AR transcriptional activity. Interacts with STK4/MST1. Interacts with ZIPK/DAPK3. Interacts with LPXN. Interacts with MAK. Part of a complex containing AR, MAK and NCOA3. Interacts with CRY1. Interacts with CCAR1 and GATA2. Interacts with ZNF318. Interacts with BUD31. Interacts with ARID4A. Interacts with ARID4B. Interacts (via NR LBD domain) with ZBTB7A; the interaction is direct and androgen-dependent. Interacts with NCOR1. Interacts with NCOR2. Interacts with CRY2 in a ligand-dependent manner. Post-translationally, phosphorylated in prostate cancer cells in response to several growth factors including EGF. Phosphorylation is induced by c-Src kinase (CSK). Tyr-526 is one of the major phosphorylation sites and an increase in phosphorylation and Src kinase activity is associated with prostate cancer progression. Phosphorylation by TNK2 enhances the DNA-binding and transcriptional activity. Phosphorylation at Ser-81 by CDK9 regulates AR promoter selectivity and cell growth. Sumoylated on Lys-385 (major) and Lys-512. Ubiquitinated. Deubiquitinated by USP26. 'Lys-6' and 'Lys-27'-linked polyubiquitination by RNF6 modulates AR transcriptional activity and specificity. In terms of processing, palmitoylated by ZDHHC7 and ZDHHC21. Palmitoylation is required for plasma membrane targeting and for rapid intracellular signaling via ERK and AKT kinases and cAMP generation.

The protein localises to the nucleus. Its subcellular location is the cytoplasm. Steroid hormone receptors are ligand-activated transcription factors that regulate eukaryotic gene expression and affect cellular proliferation and differentiation in target tissues. Transcription factor activity is modulated by bound coactivator and corepressor proteins like ZBTB7A that recruits NCOR1 and NCOR2 to the androgen response elements/ARE on target genes, negatively regulating androgen receptor signaling and androgen-induced cell proliferation. Transcription activation is also down-regulated by NR0B2. Activated, but not phosphorylated, by HIPK3 and ZIPK/DAPK3. The protein is Androgen receptor (AR) of Pan troglodytes (Chimpanzee).